A 262-amino-acid polypeptide reads, in one-letter code: MEKKITPSELELNEFIKIINEMSGIDLTDKKNILALKLNKFLEGTNTKNFSEFLGKLKSNRQLKQETLDFVTIGETYFLRELAQLKEIIYYAKSLEKRVNILSAPCSSGEEVYSLALLAAQNFIKDMYILGVDINSSVIEKAKLGKYQGRTLQRLSESEKRRFFLESEDKFYTINKNELCTCKFELCNVFEEKFSRLGKFDIIASRNMIIYFDHESKLKLMERFHRILNDKGRLYVGNADLIPETIYFKKIFSPRGVYYEKV.

The CheR-type methyltransferase domain occupies 1–262; sequence MEKKITPSEL…SPRGVYYEKV (262 aa). Residues Thr-76, Arg-80, Glu-111, Asp-133, 188–189, and 206–207 contribute to the S-adenosyl-L-methionine site; these read NV and RN.

The catalysed reaction is L-glutamyl-[protein] + S-adenosyl-L-methionine = [protein]-L-glutamate 5-O-methyl ester + S-adenosyl-L-homocysteine. In terms of biological role, methylation of the membrane-bound methyl-accepting chemotaxis proteins (MCP) to form gamma-glutamyl methyl ester residues in MCP. This Campylobacter jejuni subsp. jejuni serotype O:2 (strain ATCC 700819 / NCTC 11168) protein is Chemotaxis protein methyltransferase (cheR).